The chain runs to 428 residues: MAENDVDNELLDYEDDEVETAAGADGTEAPAKKDVKGSYVSIHSSGFRDFLLKPELLRAIVDCGFEHPSEVQHECIPQAILGMDVLCQAKSGMGKTAVFVLATLQQLEPVTGQVSVLVMCHTRELAFQISKEYERFSKYMPNVKVAVFFGGLSIKKDEEVLKKNCPHIVVGTPGRILALARNKSLNLKHIKHFILDECDKMLEQLDMRRDVQEIFRMTPHEKQVMMFSATLSKEIRPVCRKFMQDPMEIFVDDETKLTLHGLQQYYVKLKDNEKNRKLFDLLDVLEFNQVVIFVKSVQRCIALAQLLVEQNFPAIAIHRGMPQEERLSRYQQFKDFQRRILVATNLFGRGMDIERVNIAFNYDMPEDSDTYLHRVARAGRFGTKGLAITFVSDENDAKILNDVQDRFEVNISELPDEIDISSYIEQTR.

Residues 1–19 (MAENDVDNELLDYEDDEVE) show a composition bias toward acidic residues. Residues 1 to 31 (MAENDVDNELLDYEDDEVETAAGADGTEAPA) are disordered. At Ala-2 the chain carries N-acetylalanine. Lys-36 carries the N6-acetyllysine; alternate modification. Residue Lys-36 forms a Glycyl lysine isopeptide (Lys-Gly) (interchain with G-Cter in SUMO2); alternate linkage. Phosphoserine occurs at positions 38 and 41. Residues 45–73 (SGFRDFLLKPELLRAIVDCGFEHPSEVQH) carry the Q motif motif. The 174-residue stretch at 76–249 (IPQAILGMDV…RKFMQDPMEI (174 aa)) folds into the Helicase ATP-binding domain. Position 89-96 (89-96 (AKSGMGKT)) interacts with ATP. Thr-172 carries the phosphothreonine modification. The DECD box motif lies at 196 to 199 (DECD). Residues 261–422 (GLQQYYVKLK…ELPDEIDISS (162 aa)) form the Helicase C-terminal domain.

This sequence belongs to the DEAD box helicase family. DECD subfamily. As to quaternary structure, homodimer, and heterodimer with DDX39A. DDX39B interacts with the THO subcomplex to form the THO-DDX39B complex which multimerizes into a 28-subunit tetrameric assembly. Component of the transcription/export (TREX) complex at least composed of ALYREF/THOC4, DDX39B, SARNP/CIP29, CHTOP and the THO subcomplex; in the complex interacts with THOC2. THOC1-THOC2-THOC3-DDX39B subcomplex is sufficient for the interaction with export factor NXF1-NXT1. TREX seems to have a dynamic structure involving ATP-dependent remodeling. Within the TREX complex bridges ALYREF/THOC4 and the THO subcomplex, and, in a ATP-dependent manner, ALYREF/THOC4 and SARNP/CIP29. Component of the spliceosome. Interacts directly with U2AF2. Interacts with RBM8A, RNPS1 and SRRM1, FYTTD1/UIF, THOC1, MX1 and POLDIP3. Interacts with LUZP4. Interacts with SARNP/CIP29 (via the C-terminal domain); the interaction is direct and facilitates RNA binding of DDX39B.

Its subcellular location is the nucleus. It localises to the nucleus speckle. The protein localises to the cytoplasm. The catalysed reaction is ATP + H2O = ADP + phosphate + H(+). In terms of biological role, involved in nuclear export of spliced and unspliced mRNA. Component of the TREX complex which is thought to couple mRNA transcription, processing and nuclear export, and specifically associates with spliced mRNA and not with unspliced pre-mRNA. The TREX complex is recruited to spliced mRNAs by a transcription-independent mechanism, binds to mRNA upstream of the exon-junction complex (EJC) and is recruited in a splicing- and cap-dependent manner to a region near the 5' end of the mRNA where it functions in mRNA export to the cytoplasm via the TAP/NXF1 pathway. The THOC1-THOC2-THOC3 core complex alone is sufficient to promote ATPase activity of DDX39B; in the complex THOC2 is the only component that directly interacts with DDX39B. Associates with SARNP/CIP29, which facilitates RNA binding of DDX39B and likely plays a role in mRNA export. May undergo several rounds of ATP hydrolysis during assembly of TREX to drive subsequent loading of components such as ALYREF/THOC4 and CHTOP onto mRNA. Also associates with pre-mRNA independent of ALYREF/THOC4. Involved in the nuclear export of intronless mRNA; the ATP-bound form is proposed to recruit export adapter ALYREF/THOC4 to intronless mRNA; its ATPase activity is cooperatively stimulated by RNA and ALYREF/THOC4 and ATP hydrolysis is thought to trigger the dissociation from RNA to allow the association of ALYREF/THOC4 and the NXF1-NXT1 heterodimer. Involved in transcription elongation and genome stability. Functionally, splice factor that is required for the first ATP-dependent step in spliceosome assembly and for the interaction of U2 snRNP with the branchpoint. Has both RNA-stimulated ATP binding/hydrolysis activity and ATP-dependent RNA unwinding activity. Even with the stimulation of RNA, the ATPase activity is weak. Can only hydrolyze ATP but not other NTPs. The RNA stimulation of ATPase activity does not have a strong preference for the sequence and length of the RNA. However, ssRNA stimulates the ATPase activity much more strongly than dsRNA. Can unwind 5' or 3' overhangs or blunt end RNA duplexes in vitro. The ATPase and helicase activities are not influenced by U2AF2; the effect of ALYREF/THOC4 is reported conflictingly. This Mus musculus (Mouse) protein is Spliceosome RNA helicase Ddx39b (Ddx39b).